Reading from the N-terminus, the 470-residue chain is Argininosuccinate lyase (470 aa).

The protein belongs to the lyase 1 family. Argininosuccinate lyase subfamily.

Its subcellular location is the cytoplasm. The enzyme catalyses 2-(N(omega)-L-arginino)succinate = fumarate + L-arginine. It functions in the pathway amino-acid biosynthesis; L-arginine biosynthesis; L-arginine from L-ornithine and carbamoyl phosphate: step 3/3. The protein is Argininosuccinate lyase of Leptospira borgpetersenii serovar Hardjo-bovis (strain JB197).